A 320-amino-acid chain; its full sequence is Cytochrome f (320 aa).

Residues 1 to 35 (MQTRNTLSWIKEEITRSISVSLMIYIITWASISNA) form the signal peptide. The heme site is built by Tyr36, Cys56, Cys59, and His60. A helical transmembrane segment spans residues 286–306 (VQGLLFFLASVVLAQIFLVLK).

This sequence belongs to the cytochrome f family. As to quaternary structure, the 4 large subunits of the cytochrome b6-f complex are cytochrome b6, subunit IV (17 kDa polypeptide, petD), cytochrome f and the Rieske protein, while the 4 small subunits are PetG, PetL, PetM and PetN. The complex functions as a dimer. Requires heme as cofactor.

The protein localises to the plastid. It localises to the chloroplast thylakoid membrane. Its function is as follows. Component of the cytochrome b6-f complex, which mediates electron transfer between photosystem II (PSII) and photosystem I (PSI), cyclic electron flow around PSI, and state transitions. The sequence is that of Cytochrome f from Carica papaya (Papaya).